Reading from the N-terminus, the 72-residue chain is Translation initiation factor IF-1 (72 aa).

In terms of domain architecture, S1-like spans 1–72 (MSKNDVIEVE…TRGRIVYRFK (72 aa)).

The protein belongs to the IF-1 family. Component of the 30S ribosomal translation pre-initiation complex which assembles on the 30S ribosome in the order IF-2 and IF-3, IF-1 and N-formylmethionyl-tRNA(fMet); mRNA recruitment can occur at any time during PIC assembly.

The protein resides in the cytoplasm. Its function is as follows. One of the essential components for the initiation of protein synthesis. Stabilizes the binding of IF-2 and IF-3 on the 30S subunit to which N-formylmethionyl-tRNA(fMet) subsequently binds. Helps modulate mRNA selection, yielding the 30S pre-initiation complex (PIC). Upon addition of the 50S ribosomal subunit IF-1, IF-2 and IF-3 are released leaving the mature 70S translation initiation complex. This is Translation initiation factor IF-1 from Desulforamulus reducens (strain ATCC BAA-1160 / DSM 100696 / MI-1) (Desulfotomaculum reducens).